The sequence spans 397 residues: Ribosomal RNA large subunit methyltransferase I (397 aa).

A PUA domain is found at S2–K80.

It belongs to the methyltransferase superfamily. RlmI family.

It is found in the cytoplasm. It carries out the reaction cytidine(1962) in 23S rRNA + S-adenosyl-L-methionine = 5-methylcytidine(1962) in 23S rRNA + S-adenosyl-L-homocysteine + H(+). Specifically methylates the cytosine at position 1962 (m5C1962) of 23S rRNA. The polypeptide is Ribosomal RNA large subunit methyltransferase I (Vibrio vulnificus (strain CMCP6)).